Consider the following 328-residue polypeptide: Biotin synthase (328 aa).

Residues 42 to 267 (YHVQLASLLS…LMPGSRVRLS (226 aa)) form the Radical SAM core domain. Residues C57, C61, and C64 each contribute to the [4Fe-4S] cluster site. 4 residues coordinate [2Fe-2S] cluster: C101, C133, C193, and R265.

The protein belongs to the radical SAM superfamily. Biotin synthase family. Homodimer. [4Fe-4S] cluster is required as a cofactor. Requires [2Fe-2S] cluster as cofactor.

It carries out the reaction (4R,5S)-dethiobiotin + (sulfur carrier)-SH + 2 reduced [2Fe-2S]-[ferredoxin] + 2 S-adenosyl-L-methionine = (sulfur carrier)-H + biotin + 2 5'-deoxyadenosine + 2 L-methionine + 2 oxidized [2Fe-2S]-[ferredoxin]. The protein operates within cofactor biosynthesis; biotin biosynthesis; biotin from 7,8-diaminononanoate: step 2/2. In terms of biological role, catalyzes the conversion of dethiobiotin (DTB) to biotin by the insertion of a sulfur atom into dethiobiotin via a radical-based mechanism. The sequence is that of Biotin synthase from Synechococcus sp. (strain CC9311).